Here is a 337-residue protein sequence, read N- to C-terminus: Heme A synthase (337 aa).

Helical transmembrane passes span 6-26 (ITKW…IGGI), 87-107 (FIHR…LIYF), 119-139 (LPYI…WYMV), 154-174 (LAFH…QLIK), and 192-212 (LIFS…GALV). H256 is a binding site for heme. Helical transmembrane passes span 258 to 278 (LGGY…LKIE), 285 to 305 (IAYF…ITLL), and 308 to 328 (VPII…SIII). H316 is a binding site for heme.

It belongs to the COX15/CtaA family. Type 2 subfamily. Interacts with CtaB. Heme b is required as a cofactor.

It localises to the cell membrane. It catalyses the reaction Fe(II)-heme o + 2 A + H2O = Fe(II)-heme a + 2 AH2. Its pathway is porphyrin-containing compound metabolism; heme A biosynthesis; heme A from heme O: step 1/1. Its function is as follows. Catalyzes the conversion of heme O to heme A by two successive hydroxylations of the methyl group at C8. The first hydroxylation forms heme I, the second hydroxylation results in an unstable dihydroxymethyl group, which spontaneously dehydrates, resulting in the formyl group of heme A. The sequence is that of Heme A synthase from Rickettsia massiliae (strain Mtu5).